A 310-amino-acid chain; its full sequence is Lipoyl synthase (310 aa).

Residues C41, C46, C52, C68, C72, C75, and S281 each coordinate [4Fe-4S] cluster. The Radical SAM core domain maps to 54 to 270 (GERRTATFMI…RKVAMEKGFK (217 aa)). The interval 285 to 310 (DEQVNEAAKERQRIGDEKLEAAKNEA) is disordered.

The protein belongs to the radical SAM superfamily. Lipoyl synthase family. Requires [4Fe-4S] cluster as cofactor.

The protein localises to the cytoplasm. The catalysed reaction is [[Fe-S] cluster scaffold protein carrying a second [4Fe-4S](2+) cluster] + N(6)-octanoyl-L-lysyl-[protein] + 2 oxidized [2Fe-2S]-[ferredoxin] + 2 S-adenosyl-L-methionine + 4 H(+) = [[Fe-S] cluster scaffold protein] + N(6)-[(R)-dihydrolipoyl]-L-lysyl-[protein] + 4 Fe(3+) + 2 hydrogen sulfide + 2 5'-deoxyadenosine + 2 L-methionine + 2 reduced [2Fe-2S]-[ferredoxin]. It participates in protein modification; protein lipoylation via endogenous pathway; protein N(6)-(lipoyl)lysine from octanoyl-[acyl-carrier-protein]. In terms of biological role, catalyzes the radical-mediated insertion of two sulfur atoms into the C-6 and C-8 positions of the octanoyl moiety bound to the lipoyl domains of lipoate-dependent enzymes, thereby converting the octanoylated domains into lipoylated derivatives. This is Lipoyl synthase from Staphylococcus carnosus (strain TM300).